A 426-amino-acid polypeptide reads, in one-letter code: Probable imidazolonepropionase (426 aa).

Residues tyrosine 159 and histidine 192 each contribute to the 4-imidazolone-5-propanoate site. Tyrosine 159 contributes to the N-formimidoyl-L-glutamate binding site. A Fe(3+)-binding site is contributed by histidine 260. Histidine 260 serves as a coordination point for Zn(2+). Glutamate 263 is a 4-imidazolone-5-propanoate binding site. Aspartate 334 lines the Fe(3+) pocket. A Zn(2+)-binding site is contributed by aspartate 334. Residue asparagine 336 participates in N-formimidoyl-L-glutamate binding.

It belongs to the metallo-dependent hydrolases superfamily. HutI family. Zn(2+) serves as cofactor. It depends on Fe(3+) as a cofactor.

It catalyses the reaction 4-imidazolone-5-propanoate + H2O = N-formimidoyl-L-glutamate. It functions in the pathway amino-acid degradation; L-histidine degradation into L-glutamate; N-formimidoyl-L-glutamate from L-histidine: step 3/3. This Homo sapiens (Human) protein is Probable imidazolonepropionase (AMDHD1).